A 519-amino-acid polypeptide reads, in one-letter code: Protein nucleotidyltransferase YdiU (519 aa).

Positions 100, 102, 103, 123, 135, 136, 193, and 200 each coordinate ATP. Aspartate 270 (proton acceptor) is an active-site residue. Residues asparagine 271 and aspartate 280 each coordinate Mg(2+). Aspartate 280 lines the ATP pocket.

Belongs to the SELO family. Requires Mg(2+) as cofactor. It depends on Mn(2+) as a cofactor.

It catalyses the reaction L-seryl-[protein] + ATP = 3-O-(5'-adenylyl)-L-seryl-[protein] + diphosphate. It carries out the reaction L-threonyl-[protein] + ATP = 3-O-(5'-adenylyl)-L-threonyl-[protein] + diphosphate. The enzyme catalyses L-tyrosyl-[protein] + ATP = O-(5'-adenylyl)-L-tyrosyl-[protein] + diphosphate. The catalysed reaction is L-histidyl-[protein] + UTP = N(tele)-(5'-uridylyl)-L-histidyl-[protein] + diphosphate. It catalyses the reaction L-seryl-[protein] + UTP = O-(5'-uridylyl)-L-seryl-[protein] + diphosphate. It carries out the reaction L-tyrosyl-[protein] + UTP = O-(5'-uridylyl)-L-tyrosyl-[protein] + diphosphate. In terms of biological role, nucleotidyltransferase involved in the post-translational modification of proteins. It can catalyze the addition of adenosine monophosphate (AMP) or uridine monophosphate (UMP) to a protein, resulting in modifications known as AMPylation and UMPylation. The protein is Protein nucleotidyltransferase YdiU of Xylella fastidiosa (strain Temecula1 / ATCC 700964).